The following is a 396-amino-acid chain: Phosphoglycerate kinase (396 aa).

Residues 21 to 23 (DFN), R36, 59 to 62 (HLGR), R118, and R151 each bind substrate. Residues K201, G292, E323, and 349-352 (GGDS) contribute to the ATP site.

This sequence belongs to the phosphoglycerate kinase family. As to quaternary structure, monomer.

Its subcellular location is the cytoplasm. The enzyme catalyses (2R)-3-phosphoglycerate + ATP = (2R)-3-phospho-glyceroyl phosphate + ADP. It participates in carbohydrate degradation; glycolysis; pyruvate from D-glyceraldehyde 3-phosphate: step 2/5. This Leptospira interrogans serogroup Icterohaemorrhagiae serovar copenhageni (strain Fiocruz L1-130) protein is Phosphoglycerate kinase.